We begin with the raw amino-acid sequence, 200 residues long: Recombination protein RecR (200 aa).

The C4-type zinc-finger motif lies at cysteine 57–cysteine 72. One can recognise a Toprim domain in the interval glycine 80–proline 175.

Belongs to the RecR family.

Its function is as follows. May play a role in DNA repair. It seems to be involved in an RecBC-independent recombinational process of DNA repair. It may act with RecF and RecO. This chain is Recombination protein RecR, found in Marinobacter nauticus (strain ATCC 700491 / DSM 11845 / VT8) (Marinobacter aquaeolei).